A 202-amino-acid chain; its full sequence is Adenylate kinase (202 aa).

Position 12-20 (12-20) interacts with ATP; that stretch reads GVPGVGKTT.

It belongs to the archaeal adenylate kinase family.

It localises to the cytoplasm. It carries out the reaction AMP + ATP = 2 ADP. The polypeptide is Adenylate kinase (adkA) (Aeropyrum pernix (strain ATCC 700893 / DSM 11879 / JCM 9820 / NBRC 100138 / K1)).